We begin with the raw amino-acid sequence, 181 residues long: Large ribosomal subunit protein uL5c (181 aa).

The protein belongs to the universal ribosomal protein uL5 family. In terms of assembly, part of the 50S ribosomal subunit; contacts the 5S rRNA.

It is found in the plastid. The protein localises to the chloroplast. In terms of biological role, binds 5S rRNA, forms part of the central protuberance of the 50S subunit. The polypeptide is Large ribosomal subunit protein uL5c (rpl5) (Guillardia theta (Cryptophyte)).